Here is a 74-residue protein sequence, read N- to C-terminus: MDMVSLKFIGTGLMAIGMYGAALGVSNIFSSLLSSIARNPSATENLQRMALIGAGLAEAMGLFSFVIAMLLIFS.

Helical transmembrane passes span F8–I28 and I52–I72.

It belongs to the ATPase C chain family. F-type ATPases have 2 components, F(1) - the catalytic core - and F(0) - the membrane proton channel. F(1) has five subunits: alpha(3), beta(3), gamma(1), delta(1), epsilon(1). F(0) has three main subunits: a(1), b(2) and c(10-14). The alpha and beta chains form an alternating ring which encloses part of the gamma chain. F(1) is attached to F(0) by a central stalk formed by the gamma and epsilon chains, while a peripheral stalk is formed by the delta and b chains.

Its subcellular location is the cell inner membrane. F(1)F(0) ATP synthase produces ATP from ADP in the presence of a proton or sodium gradient. F-type ATPases consist of two structural domains, F(1) containing the extramembraneous catalytic core and F(0) containing the membrane proton channel, linked together by a central stalk and a peripheral stalk. During catalysis, ATP synthesis in the catalytic domain of F(1) is coupled via a rotary mechanism of the central stalk subunits to proton translocation. Its function is as follows. Key component of the F(0) channel; it plays a direct role in translocation across the membrane. A homomeric c-ring of between 10-14 subunits forms the central stalk rotor element with the F(1) delta and epsilon subunits. This is ATP synthase subunit c from Rickettsia conorii (strain ATCC VR-613 / Malish 7).